The sequence spans 343 residues: tRNA N6-adenosine threonylcarbamoyltransferase (343 aa).

Positions 108 and 112 each coordinate Fe cation. Residues 129 to 133 (LISGG), aspartate 161, glutamate 178, and serine 258 contribute to the substrate site. Aspartate 286 provides a ligand contact to Fe cation.

This sequence belongs to the KAE1 / TsaD family. Fe(2+) is required as a cofactor.

It is found in the cytoplasm. The enzyme catalyses L-threonylcarbamoyladenylate + adenosine(37) in tRNA = N(6)-L-threonylcarbamoyladenosine(37) in tRNA + AMP + H(+). In terms of biological role, required for the formation of a threonylcarbamoyl group on adenosine at position 37 (t(6)A37) in tRNAs that read codons beginning with adenine. Is probably involved in the transfer of the threonylcarbamoyl moiety of threonylcarbamoyl-AMP (TC-AMP) to the N6 group of A37. This is tRNA N6-adenosine threonylcarbamoyltransferase from Pyrobaculum aerophilum (strain ATCC 51768 / DSM 7523 / JCM 9630 / CIP 104966 / NBRC 100827 / IM2).